The following is a 584-amino-acid chain: Aspartate--tRNA(Asp/Asn) ligase (584 aa).

Residue Glu-177 participates in L-aspartate binding. Positions Gln-201–Lys-204 are aspartate. Arg-223 is a binding site for L-aspartate. ATP is bound by residues Arg-223 to Glu-225 and Gln-232. His-447 contributes to the L-aspartate binding site. Residue Glu-481 coordinates ATP. Arg-488 provides a ligand contact to L-aspartate. Residue Gly-533–Arg-536 coordinates ATP.

It belongs to the class-II aminoacyl-tRNA synthetase family. Type 1 subfamily. As to quaternary structure, homodimer.

The protein resides in the cytoplasm. The enzyme catalyses tRNA(Asx) + L-aspartate + ATP = L-aspartyl-tRNA(Asx) + AMP + diphosphate. Functionally, aspartyl-tRNA synthetase with relaxed tRNA specificity since it is able to aspartylate not only its cognate tRNA(Asp) but also tRNA(Asn). Reaction proceeds in two steps: L-aspartate is first activated by ATP to form Asp-AMP and then transferred to the acceptor end of tRNA(Asp/Asn). The chain is Aspartate--tRNA(Asp/Asn) ligase from Chlamydia abortus (strain DSM 27085 / S26/3) (Chlamydophila abortus).